The sequence spans 178 residues: Bifunctional protein PyrR (178 aa).

Positions 99-111 (VVLVDDVIYTGRT) match the PRPP-binding motif.

The protein belongs to the purine/pyrimidine phosphoribosyltransferase family. PyrR subfamily. As to quaternary structure, homodimer and homohexamer; in equilibrium.

The enzyme catalyses UMP + diphosphate = 5-phospho-alpha-D-ribose 1-diphosphate + uracil. Functionally, regulates transcriptional attenuation of the pyrimidine nucleotide (pyr) operon by binding in a uridine-dependent manner to specific sites on pyr mRNA. This disrupts an antiterminator hairpin in the RNA and favors formation of a downstream transcription terminator, leading to a reduced expression of downstream genes. In terms of biological role, also displays a weak uracil phosphoribosyltransferase activity which is not physiologically significant. In Thermoanaerobacter pseudethanolicus (strain ATCC 33223 / 39E) (Clostridium thermohydrosulfuricum), this protein is Bifunctional protein PyrR.